A 402-amino-acid polypeptide reads, in one-letter code: Zinc finger protein 322 (402 aa).

The segment at 43–65 (YQCLECKQNFCENLALIMCERTH) adopts a C2H2-type 1; atypical zinc-finger fold. 8 consecutive C2H2-type zinc fingers follow at residues 71-93 (YKCDMCEKTFVQSSDLISHQRIH), 99-121 (YKCSKCEKSFWHHLALSGHQRTH), 127-149 (YTCDICGKNFGQSSDLLVHQRSH), 155-177 (YLCSECDKCFSRSTNLIRHRRTH), 183-205 (FKCLECEKAFSGKSDLISHQRTH), 211-233 (YKCNKCEKSYRHRSAFIVHKRVH), 239-261 (YKCGACEKCFGQKSDLIVHQRVH), and 267-289 (YKCLECMRSFTRSANLIRHQATH). Residues 293–315 (FKCLEYEKSFNCSSDLIVHQRIH) form a C2H2-type 10; degenerate zinc finger. Residues 351–373 (YKYTVCDKSFHQSSALLQHQTVH) form a C2H2-type 11; degenerate zinc finger. Ser-391 carries the post-translational modification Phosphoserine.

The protein belongs to the krueppel C2H2-type zinc-finger protein family. In terms of assembly, interacts with POU5F1.

Its subcellular location is the cytoplasm. It localises to the nucleus. Its function is as follows. Transcriptional activator. Important for maintenance of pluripotency in embryonic stem cells. Binds directly to the POU5F1 distal enhancer and the NANOG proximal promoter, and enhances expression of both genes. Can also bind to numerous other gene promoters and regulates expression of many other pluripotency factors, either directly or indirectly. Promotes inhibition of MAPK signaling during embryonic stem cell differentiation. In Macaca fascicularis (Crab-eating macaque), this protein is Zinc finger protein 322 (ZNF322).